A 510-amino-acid chain; its full sequence is Putative folylpolyglutamate synthase (510 aa).

ATP is bound at residue 98-101 (GKGS). Serine 122, glutamate 189, and histidine 217 together coordinate Mg(2+). ATP contacts are provided by arginine 342 and aspartate 357.

The protein belongs to the folylpolyglutamate synthase family. Requires a monovalent cation as cofactor.

Its subcellular location is the mitochondrion inner membrane. The protein resides in the mitochondrion matrix. It localises to the cytoplasm. The catalysed reaction is (6S)-5,6,7,8-tetrahydrofolyl-(gamma-L-Glu)(n) + L-glutamate + ATP = (6S)-5,6,7,8-tetrahydrofolyl-(gamma-L-Glu)(n+1) + ADP + phosphate + H(+). Its pathway is cofactor biosynthesis; tetrahydrofolylpolyglutamate biosynthesis. Its function is as follows. Catalyzes conversion of folates to polyglutamate derivatives allowing concentration of folate compounds in the cell and the intracellular retention of these cofactors, which are important substrates for most of the folate-dependent enzymes that are involved in one-carbon transfer reactions involved in purine, pyrimidine and amino acid synthesis. This chain is Putative folylpolyglutamate synthase, found in Caenorhabditis elegans.